We begin with the raw amino-acid sequence, 458 residues long: UDP-N-acetylmuramoylalanine--D-glutamate ligase (458 aa).

Residue 124–130 (GSDGKTT) coordinates ATP.

Belongs to the MurCDEF family.

The protein resides in the cytoplasm. It carries out the reaction UDP-N-acetyl-alpha-D-muramoyl-L-alanine + D-glutamate + ATP = UDP-N-acetyl-alpha-D-muramoyl-L-alanyl-D-glutamate + ADP + phosphate + H(+). Its pathway is cell wall biogenesis; peptidoglycan biosynthesis. Its function is as follows. Cell wall formation. Catalyzes the addition of glutamate to the nucleotide precursor UDP-N-acetylmuramoyl-L-alanine (UMA). The polypeptide is UDP-N-acetylmuramoylalanine--D-glutamate ligase (Clostridium beijerinckii (strain ATCC 51743 / NCIMB 8052) (Clostridium acetobutylicum)).